Here is a 158-residue protein sequence, read N- to C-terminus: NADH-quinone oxidoreductase subunit B (158 aa).

[4Fe-4S] cluster-binding residues include cysteine 37, cysteine 38, cysteine 102, and cysteine 132.

Belongs to the complex I 20 kDa subunit family. As to quaternary structure, NDH-1 is composed of 14 different subunits. Subunits NuoB, C, D, E, F, and G constitute the peripheral sector of the complex. [4Fe-4S] cluster serves as cofactor.

The protein resides in the cell inner membrane. It catalyses the reaction a quinone + NADH + 5 H(+)(in) = a quinol + NAD(+) + 4 H(+)(out). Its function is as follows. NDH-1 shuttles electrons from NADH, via FMN and iron-sulfur (Fe-S) centers, to quinones in the respiratory chain. Couples the redox reaction to proton translocation (for every two electrons transferred, four hydrogen ions are translocated across the cytoplasmic membrane), and thus conserves the redox energy in a proton gradient. In Legionella pneumophila (strain Paris), this protein is NADH-quinone oxidoreductase subunit B.